The primary structure comprises 201 residues: Glycerol-3-phosphate acyltransferase (201 aa).

5 consecutive transmembrane segments (helical) span residues 10–30 (MLIG…GLIL), 60–80 (LAAA…LIAA), 86–106 (AAIA…WIGF), 116–136 (LGVL…AWIV), and 166–186 (ALAA…RANI).

The protein belongs to the PlsY family. Probably interacts with PlsX.

The protein localises to the cell inner membrane. The enzyme catalyses an acyl phosphate + sn-glycerol 3-phosphate = a 1-acyl-sn-glycero-3-phosphate + phosphate. It participates in lipid metabolism; phospholipid metabolism. Functionally, catalyzes the transfer of an acyl group from acyl-phosphate (acyl-PO(4)) to glycerol-3-phosphate (G3P) to form lysophosphatidic acid (LPA). This enzyme utilizes acyl-phosphate as fatty acyl donor, but not acyl-CoA or acyl-ACP. The polypeptide is Glycerol-3-phosphate acyltransferase (Brucella abortus (strain 2308)).